The sequence spans 472 residues: Carboxypeptidase Q (472 aa).

The signal sequence occupies residues 1–20; it reads MKFLIFAFFGGVHLLSLCSG. A propeptide spanning residues 21-44 is cleaved from the precursor; sequence KAICKNGISKRTFEEIKEEIASCG. N-linked (GlcNAc...) asparagine glycans are attached at residues N61 and N179. 2 residues coordinate Zn(2+): H290 and D302. E336 serves as the catalytic Nucleophile. E337 serves as a coordination point for Zn(2+). 2 N-linked (GlcNAc...) asparagine glycosylation sites follow: N353 and N356. D364 provides a ligand contact to Zn(2+). Residue N396 is glycosylated (N-linked (GlcNAc...) asparagine). Zn(2+) is bound at residue H434.

The protein belongs to the peptidase M28 family. In terms of assembly, homodimer. The monomeric form is inactive while the homodimer is active. In terms of processing, N-glycosylated. The secreted form is modified by hybrid or complex type oligosaccharide chains. In terms of tissue distribution, mainly detected in blood plasma. Abundant in placenta and kidney. Present at low level in muscles, liver and skin fibroblasts. Not detected in brain or white blood cells (at protein level).

The protein localises to the endoplasmic reticulum. It localises to the golgi apparatus. The protein resides in the lysosome. It is found in the secreted. Carboxypeptidase that may play an important role in the hydrolysis of circulating peptides. Catalyzes the hydrolysis of dipeptides with unsubstituted terminals into amino acids. May play a role in the liberation of thyroxine hormone from its thyroglobulin (Tg) precursor. The chain is Carboxypeptidase Q (CPQ) from Homo sapiens (Human).